The chain runs to 212 residues: uncharacterized protein (212 aa).

This is an uncharacterized protein from Acanthamoeba polyphaga (Amoeba).